The chain runs to 505 residues: 11S globulin seed storage protein 1 (505 aa).

The signal sequence occupies residues 1–24; it reads MAKPILLSIYLCLIIVALFNGCLA. Intrachain disulfides connect Cys-37-Cys-70 and Cys-113-Cys-323. A Cupin type-1 1 domain is found at 42–255; the sequence is LDALEPTNRI…AFNVDTETAR (214 aa). IgE-binding stretches follow at residues 118–132, 208–219, and 238–249; these read EESQ…RREF, EQHRRQQQHQQR, and FDAEFLADAFNV. Residues 193-232 are disordered; sequence GNPDDEFRPQGQQEYEQHRRQQQHQQRRGEHGEQQRDLGN. Over residues 219 to 228 the composition is skewed to basic and acidic residues; that stretch reads RRGEHGEQQR. A compositionally biased stretch (basic and acidic residues) spans 282–316; it reads WSREEQEHEERKERERERESESERRQSRRGGRDDN. The interval 282-318 is disordered; it reads WSREEQEHEERKERERERESESERRQSRRGGRDDNGL. Residues 316–321 carry the NGXEET; peptidase recognition motif motif; sequence NGLEET. In terms of domain architecture, Cupin type-1 2 spans 329-478; that stretch reads ENIGDPSRAD…AFQIPREDAR (150 aa).

It belongs to the 11S seed storage protein (globulins) family. As to quaternary structure, homohexamer. Each subunit is composed of an acidic and a basic chain derived from a single precursor and linked by a disulfide bond. As to expression, expressed in seeds (at protein level). Expressed in seeds.

Seed storage protein. The protein is 11S globulin seed storage protein 1 of Carya illinoinensis (Pecan).